The chain runs to 121 residues: uncharacterized protein (121 aa).

Residues 1 to 23 form the signal peptide; the sequence is MNFSTVFQAIIAVLGLTTVTALA. 2 N-linked (GlcNAc...) asparagine glycosylation sites follow: Asn68 and Asn84.

Post-translationally, N-glycosylated.

This is an uncharacterized protein from Saccharomyces cerevisiae (strain ATCC 204508 / S288c) (Baker's yeast).